Reading from the N-terminus, the 261-residue chain is Chanoclavine-I dehydrogenase ifgE (261 aa).

The signal sequence occupies residues 1–20; that stretch reads MASVKSRVFAITGGASGIGA. NADP(+)-binding residues include Ile-18, Lys-48, Asp-66, Arg-132, Tyr-166, Lys-170, and Thr-201. Catalysis depends on Tyr-166, which acts as the Proton acceptor. Lys-170 acts as the Lowers pKa of active site Tyr in catalysis.

It belongs to the short-chain dehydrogenases/reductases (SDR) family.

It functions in the pathway alkaloid biosynthesis; ergot alkaloid biosynthesis. Functionally, chanoclavine-I dehydrogenase; part of the gene cluster that mediates the biosynthesis of isofumigaclavines, fungal ergot alkaloids. The tryptophan dimethylallyltransferase ifgA catalyzes the first step of ergot alkaloid biosynthesis by condensing dimethylallyl diphosphate (DMAP) and tryptophan to form 4-dimethylallyl-L-tryptophan. The second step is catalyzed by the methyltransferase ifgB that methylates 4-dimethylallyl-L-tryptophan in the presence of S-adenosyl-L-methionine, resulting in the formation of N-methyl-dimethylallyl-L-tryptophan. The catalase ifgD and the FAD-dependent oxidoreductase ifgC then transform N-methyl-dimethylallyl-L-tryptophan to chanoclavine-I which is further oxidized by ifgE in the presence of NAD(+), resulting in the formation of chanoclavine-I aldehyde. The chanoclavine-I aldehyde reductases ifgG and/or fgaOx3 reduce chanoclavine-I aldehyde to dihydrochanoclavine-I aldehyde that spontaneously dehydrates to form 6,8-dimethyl-6,7-didehydroergoline. The festuclavine dehydrogenases ifgF1 and/or ifgF2 then catalyze the reduction of 6,8-dimethyl-6,7-didehydroergoline to form festuclavine. Hydrolysis of festuclavine by a yet undetermined cytochrome P450 monooxygenase (called ifgH) then leads to the formation of isofumigaclavine B which is in turn acetylated by ifgI to isofumigaclavine A. Penicillium roqueforti has interestingly at least two sets of genes for the consumption of chanoclavine-I aldehyde on three different loci, the OYEs ifgG/fgaOx3 and the festuclavine synthase homologs ifgF1/ifgF2. The reason for the duplication of these genes is unclear, probably to ensure the conversion of chanoclavine-I aldehyde by differential gene expression under various environmental conditions. This chain is Chanoclavine-I dehydrogenase ifgE, found in Penicillium roqueforti (strain FM164).